Reading from the N-terminus, the 599-residue chain is Sulfite reductase [NADPH] flavoprotein alpha-component (599 aa).

Positions 64–202 constitute a Flavodoxin-like domain; that stretch reads ITIISASQTG…AASEWRARVV (139 aa). FMN contacts are provided by residues 70-75, 117-120, and 153-162; these read SQTGNA, STQG, and LGDSSYEFFC. An FAD-binding FR-type domain is found at 234–448; it reads DAPLVASLSV…IEHNDNFRLP (215 aa). Residues T322, A356, 386–389, 404–406, Y410, and 419–422 each bind FAD; these read RLYS, TVG, and GGAS. NADP(+) is bound by residues 519-520, 525-529, and D561; these read SR and KVYVQ. Y599 lines the FAD pocket.

It belongs to the NADPH-dependent sulphite reductase flavoprotein subunit CysJ family. The protein in the N-terminal section; belongs to the flavodoxin family. In the C-terminal section; belongs to the flavoprotein pyridine nucleotide cytochrome reductase family. In terms of assembly, alpha(8)-beta(8). The alpha component is a flavoprotein, the beta component is a hemoprotein. It depends on FAD as a cofactor. FMN serves as cofactor.

The enzyme catalyses hydrogen sulfide + 3 NADP(+) + 3 H2O = sulfite + 3 NADPH + 4 H(+). Its pathway is sulfur metabolism; hydrogen sulfide biosynthesis; hydrogen sulfide from sulfite (NADPH route): step 1/1. Its function is as follows. Component of the sulfite reductase complex that catalyzes the 6-electron reduction of sulfite to sulfide. This is one of several activities required for the biosynthesis of L-cysteine from sulfate. The flavoprotein component catalyzes the electron flow from NADPH -&gt; FAD -&gt; FMN to the hemoprotein component. The chain is Sulfite reductase [NADPH] flavoprotein alpha-component from Escherichia coli O157:H7.